We begin with the raw amino-acid sequence, 175 residues long: Translation initiation factor IF-3 (175 aa).

Belongs to the IF-3 family. As to quaternary structure, monomer.

Its subcellular location is the cytoplasm. In terms of biological role, IF-3 binds to the 30S ribosomal subunit and shifts the equilibrium between 70S ribosomes and their 50S and 30S subunits in favor of the free subunits, thus enhancing the availability of 30S subunits on which protein synthesis initiation begins. This is Translation initiation factor IF-3 from Chromobacterium violaceum (strain ATCC 12472 / DSM 30191 / JCM 1249 / CCUG 213 / NBRC 12614 / NCIMB 9131 / NCTC 9757 / MK).